A 148-amino-acid chain; its full sequence is Arginine repressor (148 aa).

This sequence belongs to the ArgR family.

It localises to the cytoplasm. It functions in the pathway amino-acid biosynthesis; L-arginine biosynthesis [regulation]. Its function is as follows. Regulates arginine biosynthesis genes. The sequence is that of Arginine repressor from Acidobacterium capsulatum (strain ATCC 51196 / DSM 11244 / BCRC 80197 / JCM 7670 / NBRC 15755 / NCIMB 13165 / 161).